A 943-amino-acid chain; its full sequence is MVKSYQRFEQAAAFGVIASNANCVWIPASSGNSNGSGPGQLITSALEDVNIWDIKTGDLVSKLSDGLPPGASDARGAKPAECTYLEAHKDTDLLAVGYADGVIKVWDLMSKTVLLNFNGHKAAITLLQFDGTGTRLISGSKDSNIIVWDLVGEVGLYKLRSHKDSITGFWCQGEDWLISTSKDGMIKLWDLKTHQCIETHIAHTGECWGLAVKDDLLITTGTDSQVKIWKLDIENDKMGGKLTEMGIFEKQSKQRGLKIEFITNSSDKTSFFYIQNADKTIETFRIRKEEEIARGLKKREKRLKEKGLTEEEIAKSIKESYSSFILHPFQTIRSLYKIKSASWTTVSSSKLELVLTTSSNTIEYYSIPYEKRDPTSPAPLKTHTIELQGQRTDVRSIDISDDNKLLATASNGSLKIWNIKTHKCIRTFECGYALTCKFLPGGLLVILGTRNGELQLFDLASSSLLDTIEDAHDAAIWSLDLTSDGKRLVTGSADKTVKFWDFKVENSLVPGTKNKFLPVLKLHHDTTLELTDDILCVRVSPDDRYLAISLLDNTVKVFFLDSMKFYLSLYGHKLPVLSIDISFDSKMIITSSADKNIKIWGLDFGDCHKSLFAHQDSIMNVKFLPQSHNFFSCSKDAVVKYWDGEKFECIQKLYAHQSEVWALAVATDGGFVVSSSHDHSIRIWEETEDQVFLEEEKEKELEEQYEDTLLTSLEEGNGDDAFKADASGEGVEDEASGVHKQTLESLKAGERLMEALDLGIAEIEGLEAYNRDMKLWQRKKLGEAPIKPQGNAVLIAVNKTPEQYIMDTLLRIRMSQLEDALMVMPFSYVLKFLKFIDTVMQNKTLLHSHLPLICKNLFFIIKFNHKELVSQKNEELKLQINRVKTELRSALKSTEDDLGFNVQGLKFVKQQWNLRHNYEFVDEYDQQEKESNSARKRVFGTVI.

10 WD repeats span residues 77-107 (AKPA…KVWD), 119-149 (GHKA…IVWD), 161-190 (SHKD…KLWD), 202-230 (AHTG…KIWK), 389-418 (GQRT…KIWN), 428-458 (FECG…QLFD), 471-501 (AHDA…KFWD), 571-601 (GHKL…KIWG), 613-643 (AHQD…KYWD), and 655-685 (AHQS…RIWE). Residues 715-739 (EGNGDDAFKADASGEGVEDEASGVH) form a disordered region.

This sequence belongs to the WD repeat WDR3/UTP12 family. As to quaternary structure, interacts with snoRNA U3. Interacts with MPP10. Component of the ribosomal small subunit (SSU) processome composed of at least 40 protein subunits and snoRNA U3.

It is found in the nucleus. The protein resides in the nucleolus. Its function is as follows. Involved in nucleolar processing of pre-18S ribosomal RNA. In Saccharomyces cerevisiae (strain ATCC 204508 / S288c) (Baker's yeast), this protein is U3 small nucleolar RNA-associated protein 12 (DIP2).